A 183-amino-acid chain; its full sequence is UPF0397 protein VSAL_I1988 (183 aa).

5 helical membrane passes run V8–I28, A41–I61, V74–I94, F110–F130, and L147–T167.

This sequence belongs to the UPF0397 family.

It localises to the cell membrane. In Aliivibrio salmonicida (strain LFI1238) (Vibrio salmonicida (strain LFI1238)), this protein is UPF0397 protein VSAL_I1988.